Reading from the N-terminus, the 988-residue chain is Voltage-gated delayed rectifier potassium channel KCNH5 (988 aa).

The Cytoplasmic segment spans residues 1–217 (MPGGKRGLVA…LHYCAFKTTW (217 aa)). A PAS domain is found at 14–86 (TFLENIVRRS…TIEKVRQTFD (73 aa)). The PAC domain occupies 91 to 143 (NCFEVLLYKKNRTPVWFYMQIAPIRNEHEKVVLFLCTFKDITLFKQPIEDDST). A helical transmembrane segment spans residues 218–238 (DWVILILTFYTAIMVPYNVSF). The Extracellular portion of the chain corresponds to 239–243 (KTKQN). A helical transmembrane segment spans residues 244 to 264 (NIAWLVLDSVVDVIFLVDIVL). The Cytoplasmic segment spans residues 265–291 (NFHTTFVGPGGEVISDPKLIRMNYLKT). The chain crosses the membrane as a helical span at residues 292-312 (WFVIDLLSCLPYDIINAFENV). At 313–319 (DEGISSL) the chain is on the extracellular side. The helical; Voltage-sensor transmembrane segment at 320-340 (FSSLKVVRLLRLGRVARKLDH) threads the bilayer. Residues 341–346 (YLEYGA) lie on the Cytoplasmic side of the membrane. A helical membrane pass occupies residues 347–367 (AVLVLLVCVFGLVAHWLACIW). Topologically, residues 368 to 419 (YSIGDYEVIDEVTNTIQIDSWLYQLALSIGTPYRYNTSAGIWEGGPSKDSLY) are extracellular. N-linked (GlcNAc...) asparagine glycosylation is present at Asn403. Residues 420 to 440 (VSSLYFTMTSLTTIGFGNIAP) constitute an intramembrane region (pore-forming). Residues 432–437 (TIGFGN) carry the Selectivity filter motif. Over 441 to 446 (TTDVEK) the chain is Extracellular. A helical transmembrane segment spans residues 447–467 (MFSVAMMMVGSLLYATIFGNV). Over 468-988 (TTIFQQMYAN…PESDKDEINF (521 aa)) the chain is Cytoplasmic. Residue 550-668 (AFRLASDGCL…SFSRNLTLTC (119 aa)) participates in a nucleoside 3',5'-cyclic phosphate binding. The tract at residues 704–715 (HPVRKLFQKFKQ) is calmodulin-binding. The segment at 721 to 741 (IQGSAQSDPERSQLQVESRPL) is disordered. Positions 723-741 (GSAQSDPERSQLQVESRPL) are enriched in polar residues. Lys785 participates in a covalent cross-link: Glycyl lysine isopeptide (Lys-Gly) (interchain with G-Cter in ubiquitin). A disordered region spans residues 838–893 (GLLSEDPKGSDSENSVTKNPLRKTDSCDSGITKSDLRLDKAGEARSPLEHSPSQAD). Basic and acidic residues predominate over residues 871 to 885 (SDLRLDKAGEARSPL). Ser883 carries the post-translational modification Phosphoserine. Positions 909 to 948 (TLQEVKHELKEDIQLLSCRMTALEKQVAEILKLLSEKSVP) are CAD (involved in subunit assembly).

It belongs to the potassium channel family. H (Eag) (TC 1.A.1.20) subfamily. Kv10.2/KCNH5 sub-subfamily. As to quaternary structure, homotetramer. The potassium channel is probably composed of a homo- or heterotetrameric complex of pore-forming alpha subunits that can associate with modulating beta subunits. Heteromultimer with KCNH1/EAG.

The protein resides in the membrane. The catalysed reaction is K(+)(in) = K(+)(out). Functionally, pore-forming (alpha) subunit of a voltage-gated delayed rectifier potassium channel that mediates outward-rectifying potassium currents which, on depolarization, reaches a steady-state level and do not inactivate. The kinetic is characterized by a slow activation time course and a small voltage dependence of the activation time constants, therefore, starts to open at more negative voltages. The activation kinetics depend on the prepulse potential and external divalent cation concentration. The time course of activation is biphasic with a fast and a slowly activating current component. With negative prepulses, the current activation is delayed and slowed down several fold, whereas more positive prepulses speed up activation, therefore the activation rate depends on holding potential. This is Voltage-gated delayed rectifier potassium channel KCNH5 from Mus musculus (Mouse).